Consider the following 1134-residue polypeptide: Tyrosine-protein kinase receptor Tie-1 (1134 aa).

Positions 1 to 22 (MVWWGSSLLLPTLFLASHVGAS) are cleaved as a signal peptide. The Extracellular segment spans residues 23–755 (VDLTLLANLR…SRAAEEGLDQ (733 aa)). The 81-residue stretch at 43 to 123 (CVSGEAGAGR…VLYVHNSPGA (81 aa)) folds into the Ig-like C2-type 1 domain. N-linked (GlcNAc...) asparagine glycans are attached at residues Asn-81 and Asn-159. EGF-like domains follow at residues 212–254 (GCGA…TRCE), 256–301 (ACRE…SQCQ), and 303–343 (ACAP…VHCE). Intrachain disulfides connect Cys-226–Cys-235, Cys-229–Cys-242, Cys-244–Cys-253, Cys-266–Cys-276, Cys-270–Cys-289, Cys-291–Cys-300, Cys-313–Cys-325, Cys-319–Cys-331, and Cys-333–Cys-342. In terms of domain architecture, Ig-like C2-type 2 spans 349 to 440 (PQILSMATEV…GQDSRRFKVN (92 aa)). Fibronectin type-III domains are found at residues 444 to 543 (PPVP…CPEP), 546 to 638 (QPWL…LPPS), and 642 to 736 (APRH…LGNG). 3 N-linked (GlcNAc...) asparagine glycosylation sites follow: Asn-501, Asn-592, and Asn-705. A helical membrane pass occupies residues 756 to 780 (QLVLAVVGSVSATCLTILAALLALV). Topologically, residues 781–1134 (CIRRSCLHRR…AGIDATAEEA (354 aa)) are cytoplasmic. The Protein kinase domain maps to 835–1114 (ITFEDLIGEG…RMLEARKAYV (280 aa)). ATP is bound by residues 841 to 849 (IGEGNFGQV) and Lys-866. Residue Asp-975 is the Proton acceptor of the active site. Tyr-1003 carries the post-translational modification Phosphotyrosine; by autocatalysis.

It belongs to the protein kinase superfamily. Tyr protein kinase family. Tie subfamily. Heterodimer with TEK/TIE2. Interacts with SVEP1 (via C-terminus). In terms of processing, phosphorylated on tyrosine residues in response to ANGPT1, most likely by TEK/TIE2. As to expression, specifically expressed in developing vascular endothelial cells. Abundantly expressed in lung and heart, moderately in brain, liver and kidney, and weakly in thymus, spleen and testis.

The protein resides in the cell membrane. It catalyses the reaction L-tyrosyl-[protein] + ATP = O-phospho-L-tyrosyl-[protein] + ADP + H(+). Transmembrane tyrosine-protein kinase that may modulate TEK/TIE2 activity and contribute to the regulation of angiogenesis. The protein is Tyrosine-protein kinase receptor Tie-1 (Tie1) of Mus musculus (Mouse).